The chain runs to 87 residues: Large ribosomal subunit protein bL27 (87 aa).

Residues 1–11 are compositionally biased toward polar residues; sequence MASKASGGSTR. Positions 1–21 are disordered; that stretch reads MASKASGGSTRNGRDSNSKRL.

The protein belongs to the bacterial ribosomal protein bL27 family.

The sequence is that of Large ribosomal subunit protein bL27 from Hydrogenobaculum sp. (strain Y04AAS1).